Reading from the N-terminus, the 490-residue chain is N-succinylglutamate 5-semialdehyde dehydrogenase (490 aa).

Position 223-228 (223-228 (GSSRTG)) interacts with NAD(+). Residues Glu246 and Cys280 contribute to the active site.

The protein belongs to the aldehyde dehydrogenase family. AstD subfamily.

It catalyses the reaction N-succinyl-L-glutamate 5-semialdehyde + NAD(+) + H2O = N-succinyl-L-glutamate + NADH + 2 H(+). It participates in amino-acid degradation; L-arginine degradation via AST pathway; L-glutamate and succinate from L-arginine: step 4/5. In terms of biological role, catalyzes the NAD-dependent reduction of succinylglutamate semialdehyde into succinylglutamate. The sequence is that of N-succinylglutamate 5-semialdehyde dehydrogenase from Pseudoalteromonas atlantica (strain T6c / ATCC BAA-1087).